Here is a 134-residue protein sequence, read N- to C-terminus: Small ribosomal subunit protein uS11 (134 aa).

This sequence belongs to the universal ribosomal protein uS11 family. Component of the small ribosomal subunit.

Its subcellular location is the cytoplasm. This chain is Small ribosomal subunit protein uS11 (RPS14), found in Encephalitozoon cuniculi (strain GB-M1) (Microsporidian parasite).